The primary structure comprises 135 residues: Ribosomal RNA large subunit methyltransferase H (135 aa).

S-adenosyl-L-methionine is bound by residues leucine 52, glycine 83, and 102–107; that span reads LSSLTL.

This sequence belongs to the RNA methyltransferase RlmH family. Homodimer.

It localises to the cytoplasm. It carries out the reaction pseudouridine(1915) in 23S rRNA + S-adenosyl-L-methionine = N(3)-methylpseudouridine(1915) in 23S rRNA + S-adenosyl-L-homocysteine + H(+). Functionally, specifically methylates the pseudouridine at position 1915 (m3Psi1915) in 23S rRNA. This is Ribosomal RNA large subunit methyltransferase H from Polynucleobacter necessarius subsp. necessarius (strain STIR1).